The following is a 174-amino-acid chain: UPF0340 protein SAB1998c (174 aa).

This sequence belongs to the UPF0340 family.

The chain is UPF0340 protein SAB1998c from Staphylococcus aureus (strain bovine RF122 / ET3-1).